A 98-amino-acid polypeptide reads, in one-letter code: C-X-C motif chemokine 10 (98 aa).

Positions 1–21 are cleaved as a signal peptide; it reads MNQTAILICCLIFLTLSGIQG. R26 is modified (citrulline; by PAD2). 2 cysteine pairs are disulfide-bonded: C30/C57 and C32/C74.

This sequence belongs to the intercrine alpha (chemokine CxC) family. In terms of assembly, monomer, dimer, and tetramer. Interacts with CXCR3 (via N-terminus). Post-translationally, several proteases can mediate post-secretion cleavages. DPP4 cleaves CXCL10 on its N-terminal 2 amino acids leading to an antagonist form of CXCL10. This dominant negative form is capable of binding CXCR3 but does not induce signaling. MMP9 cleaves 9 amino acids instead. In terms of tissue distribution, mainly secreted by monocytes, endothelial cells as well as fibroblasts. Expressed by epithelial cells in thymus. Microglial cells produce CXCL10 in response to viral stimulation.

It is found in the secreted. Its function is as follows. Pro-inflammatory cytokine that is involved in a wide variety of processes such as chemotaxis, differentiation, and activation of peripheral immune cells, regulation of cell growth, apoptosis and modulation of angiostatic effects. Plays thereby an important role during viral infections by stimulating the activation and migration of immune cells to the infected sites. Mechanistically, binding of CXCL10 to the CXCR3 receptor activates G protein-mediated signaling and results in downstream activation of phospholipase C-dependent pathway, an increase in intracellular calcium production and actin reorganization. In turn, recruitment of activated Th1 lymphocytes occurs at sites of inflammation. Activation of the CXCL10/CXCR3 axis also plays an important role in neurons in response to brain injury for activating microglia, the resident macrophage population of the central nervous system, and directing them to the lesion site. This recruitment is an essential element for neuronal reorganization. This is C-X-C motif chemokine 10 (CXCL10) from Homo sapiens (Human).